A 155-amino-acid polypeptide reads, in one-letter code: Plastocyanin, chloroplastic (155 aa).

A chloroplast-targeting transit peptide spans 1 to 58 (MAALSSAAVSVPSFAAATPMRSSRSSRMVVRASLGKKAASAAVAMAAGAMLLGGSAMA). The Plastocyanin-like domain maps to 59-155 (QDVLLGANGG…AGMVGKVTVN (97 aa)). The Cu cation site is built by His95, Cys140, His143, and Met148.

The protein belongs to the plastocyanin family. Cu(2+) is required as a cofactor.

It localises to the plastid. It is found in the chloroplast thylakoid membrane. Functionally, participates in electron transfer between P700 and the cytochrome b6-f complex in photosystem I. The protein is Plastocyanin, chloroplastic (PETE) of Hordeum vulgare (Barley).